A 470-amino-acid chain; its full sequence is Uronate isomerase (470 aa).

Belongs to the metallo-dependent hydrolases superfamily. Uronate isomerase family.

It catalyses the reaction D-glucuronate = D-fructuronate. The enzyme catalyses aldehydo-D-galacturonate = keto-D-tagaturonate. Its pathway is carbohydrate metabolism; pentose and glucuronate interconversion. This is Uronate isomerase from Salmonella newport (strain SL254).